Here is a 118-residue protein sequence, read N- to C-terminus: Beta-2-microglobulin (118 aa).

The first 20 residues, 1-20 (MAVSAALVLLGLLSLSGLDA), serve as a signal peptide directing secretion. One can recognise an Ig-like C1-type domain in the interval 25-112 (PEVQVYSRHP…HVTLTQPKIV (88 aa)). A disulfide bridge links cysteine 45 with cysteine 99.

It belongs to the beta-2-microglobulin family. In terms of assembly, heterodimer of an alpha chain and a beta chain. Beta-2-microglobulin is the beta-chain of major histocompatibility complex class I molecules.

Its subcellular location is the secreted. Its function is as follows. Component of the class I major histocompatibility complex (MHC). Involved in the presentation of peptide antigens to the immune system. This chain is Beta-2-microglobulin (B2M), found in Ovis aries (Sheep).